A 538-amino-acid polypeptide reads, in one-letter code: MKAFPVICLGFAIFSSSICVNINILQQIGYIKQQVRQLSYYSQSSSSYVVVKLLPNIQPTDNSCEFKSVTQYNKTLSNLLLPIAENINNITSPSPGSRRHKRFAGIAIGIAALGVATAAQVTAAVSLVQAQTNARAIAAMKNSIQATNRAVFEVKEGTQQLAIAVQAIQDHINTIMNTQLNNMSCQILDNQLATSLGLYLTELTTVFRPQLINPALSPISIQALRSLLGSMTPAVVQATLSTSISAAEILSAGLMEGQIVSVLLDEMQMIVKINVPTIVTQSNALVIDFYSISSFINNQESIIQLPDRILEIGNEQWRYPAKNCKLTRHHIFCQYNEAERLSLETKLSVAGNISACVFSSIAGSYMRRFVALDGTIVANCRSLTCLCKSPSYPIYQPDHHAVTTIDLTSCQTLSLDGLDFSIVSLSNITYAENLTISLSQTINTQPIDISTELSKVNASLQNAVKYIKESNHQLQSVSVSSKIGAIIVAALVLSILSIIISLLFCFWAYIATKEIRRINFKTNHINTISSSVDDLIRY.

Positions 1–19 (MKAFPVICLGFAIFSSSIC) are cleaved as a signal peptide. The Extracellular portion of the chain corresponds to 20-486 (VNINILQQIG…VSVSSKIGAI (467 aa)). Residues Asn-56, Asn-73, and Asn-89 are each glycosylated (N-linked (GlcNAc...) asparagine; by host). The interval 103–127 (FAGIAIGIAALGVATAAQVTAAVSL) is fusion peptide. The stretch at 128-156 (VQAQTNARAIAAMKNSIQATNRAVFEVKE) forms a coiled coil. The N-linked (GlcNAc...) asparagine; by host glycan is linked to Asn-182. Cys-324 and Cys-333 are disulfide-bonded. The N-linked (GlcNAc...) asparagine; by host glycan is linked to Asn-352. 2 disulfides stabilise this stretch: Cys-380–Cys-385 and Cys-387–Cys-410. 3 N-linked (GlcNAc...) asparagine; by host glycosylation sites follow: Asn-427, Asn-433, and Asn-457. Residues 452-477 (ELSKVNASLQNAVKYIKESNHQLQSV) adopt a coiled-coil conformation. The helical transmembrane segment at 487 to 507 (IVAALVLSILSIIISLLFCFW) threads the bilayer. Residues 508–538 (AYIATKEIRRINFKTNHINTISSSVDDLIRY) are Cytoplasmic-facing.

Belongs to the paramyxoviruses fusion glycoprotein family. As to quaternary structure, homotrimer; disulfide-linked F1-F2. Interacts with host LAMP1; LAMP2 and LAMP3; these interactions promote the cleavage of the viral fusion protein F. In terms of processing, the inactive precursor F0 is glycosylated and proteolytically cleaved into F1 and F2 to be functionally active. The cleavage is mediated by cellular proteases including host FURIN during the transport and maturation of the polypeptide.

The protein resides in the virion membrane. Its subcellular location is the host cell membrane. Class I viral fusion protein. Under the current model, the protein has at least 3 conformational states: pre-fusion native state, pre-hairpin intermediate state, and post-fusion hairpin state. During viral and plasma cell membrane fusion, the heptad repeat (HR) regions assume a trimer-of-hairpins structure, positioning the fusion peptide in close proximity to the C-terminal region of the ectodomain. The formation of this structure appears to drive apposition and subsequent fusion of viral and plasma cell membranes. Directs fusion of viral and cellular membranes leading to delivery of the nucleocapsid into the cytoplasm. This fusion is pH independent and occurs directly at the outer cell membrane. The trimer of F1-F2 (F protein) probably interacts with HN at the virion surface. Upon HN binding to its cellular receptor, the hydrophobic fusion peptide is unmasked and interacts with the cellular membrane, inducing the fusion between cell and virion membranes. Later in infection, F proteins expressed at the plasma membrane of infected cells could mediate fusion with adjacent cells to form syncytia, a cytopathic effect that could lead to tissue necrosis. This is Fusion glycoprotein F0 (F) from Homo sapiens (Human).